Reading from the N-terminus, the 430-residue chain is Histidinol dehydrogenase (430 aa).

Substrate-binding residues include S237, Q259, and H262. Positions 259 and 262 each coordinate Zn(2+). Active-site proton acceptor residues include E327 and H328. Substrate contacts are provided by H328, D361, E415, and H420. D361 contributes to the Zn(2+) binding site. H420 contributes to the Zn(2+) binding site.

It belongs to the histidinol dehydrogenase family. It depends on Zn(2+) as a cofactor.

The catalysed reaction is L-histidinol + 2 NAD(+) + H2O = L-histidine + 2 NADH + 3 H(+). It participates in amino-acid biosynthesis; L-histidine biosynthesis; L-histidine from 5-phospho-alpha-D-ribose 1-diphosphate: step 9/9. Catalyzes the sequential NAD-dependent oxidations of L-histidinol to L-histidinaldehyde and then to L-histidine. This Mesorhizobium japonicum (strain LMG 29417 / CECT 9101 / MAFF 303099) (Mesorhizobium loti (strain MAFF 303099)) protein is Histidinol dehydrogenase.